Consider the following 177-residue polypeptide: Large ribosomal subunit protein uL6 (177 aa).

Belongs to the universal ribosomal protein uL6 family. As to quaternary structure, part of the 50S ribosomal subunit.

Its function is as follows. This protein binds to the 23S rRNA, and is important in its secondary structure. It is located near the subunit interface in the base of the L7/L12 stalk, and near the tRNA binding site of the peptidyltransferase center. The sequence is that of Large ribosomal subunit protein uL6 from Albidiferax ferrireducens (strain ATCC BAA-621 / DSM 15236 / T118) (Rhodoferax ferrireducens).